A 442-amino-acid polypeptide reads, in one-letter code: Glutamate-1-semialdehyde 2,1-aminomutase (442 aa).

N6-(pyridoxal phosphate)lysine is present on Lys282.

This sequence belongs to the class-III pyridoxal-phosphate-dependent aminotransferase family. HemL subfamily. As to quaternary structure, homodimer. Pyridoxal 5'-phosphate is required as a cofactor.

Its subcellular location is the cytoplasm. The enzyme catalyses (S)-4-amino-5-oxopentanoate = 5-aminolevulinate. The protein operates within porphyrin-containing compound metabolism; protoporphyrin-IX biosynthesis; 5-aminolevulinate from L-glutamyl-tRNA(Glu): step 2/2. This is Glutamate-1-semialdehyde 2,1-aminomutase from Polaromonas naphthalenivorans (strain CJ2).